The following is an 871-amino-acid chain: Synaptonemal complex protein 1 (871 aa).

The segment at 1–40 (MQKLGFPAMKSLDKPRSLSGSANMYSFSNRKPPDSVSSGS) is disordered. Positions 18-40 (LSGSANMYSFSNRKPPDSVSSGS) are enriched in polar residues. Coiled coils occupy residues 58–304 (MRTD…DKKN) and 331–608 (LALD…EESK). Disordered stretches follow at residues 708–741 (VMSDNPPEEQEVNSNKNYSISKDSRLGGSKRSEH) and 778–871 (SVLS…YAFD). Residues 719–728 (VNSNKNYSIS) show a composition bias toward polar residues. The segment covering 729–741 (KDSRLGGSKRSEH) has biased composition (basic and acidic residues). Polar residues predominate over residues 831–847 (LTPQSIAKGTGMTSHAR).

It localises to the nucleus. Functionally, required for chromosome synapsis and normal fidelity of crossing over. This Arabidopsis thaliana (Mouse-ear cress) protein is Synaptonemal complex protein 1 (ZYP1A).